The chain runs to 444 residues: C4-dicarboxylate transport protein (444 aa).

Transmembrane regions (helical) follow at residues 17 to 37 (PFYTHLYVQVLAAIAAGILLG), 57 to 77 (LVKMIIAPVIFLTVATGIAGM), 92 to 112 (LYFLTFSTLALIIGLIVANVV), 139 to 159 (EQSIVGFLTNIIPTTIVGAFA), 161 to 181 (GDILQVLFFSVLFGIALAMVG), 201 to 221 (LVAILMKAAPIGAFGAMAFTI), 234 to 254 (MLIGTFYITSLLFVLVVLGAV), 320 to 340 (IYMTLAALFIAQATGIQLSWG), and 368 to 388 (AATLSVVPSVPVAGMALILGI).

The protein belongs to the dicarboxylate/amino acid:cation symporter (DAACS) (TC 2.A.23) family.

It is found in the cell inner membrane. Its function is as follows. Responsible for the transport of dicarboxylates such as succinate, fumarate, and malate from the periplasm across the membrane. This is C4-dicarboxylate transport protein from Rhizobium johnstonii (strain DSM 114642 / LMG 32736 / 3841) (Rhizobium leguminosarum bv. viciae).